The chain runs to 104 residues: Large ribosomal subunit protein uL24 (104 aa).

The protein belongs to the universal ribosomal protein uL24 family. In terms of assembly, part of the 50S ribosomal subunit.

Functionally, one of two assembly initiator proteins, it binds directly to the 5'-end of the 23S rRNA, where it nucleates assembly of the 50S subunit. Its function is as follows. One of the proteins that surrounds the polypeptide exit tunnel on the outside of the subunit. In Clostridium botulinum (strain Alaska E43 / Type E3), this protein is Large ribosomal subunit protein uL24.